The primary structure comprises 536 residues: Probable galacturonosyltransferase 10 (536 aa).

Topologically, residues 1-16 (MRRRGGDSFRRAGRRK) are cytoplasmic. A helical; Signal-anchor for type II membrane protein membrane pass occupies residues 17–37 (ISNVVWWVLSGIALLLFFLIL). Over 38–536 (SKAGHIEPRP…SPFMQQCNFH (499 aa)) the chain is Lumenal. N-linked (GlcNAc...) asparagine glycans are attached at residues Asn64, Asn246, Asn300, Asn403, and Asn436.

It belongs to the glycosyltransferase 8 family. In terms of tissue distribution, expressed in roots, inflorescences, siliques, leaves and stems.

It localises to the golgi apparatus membrane. It functions in the pathway glycan metabolism; pectin biosynthesis. Functionally, may be involved in pectin and/or xylans biosynthesis in cell walls. This Arabidopsis thaliana (Mouse-ear cress) protein is Probable galacturonosyltransferase 10 (GAUT10).